We begin with the raw amino-acid sequence, 293 residues long: Release factor glutamine methyltransferase (293 aa).

Residues 130-134 (GTGSG), Asp153, Trp182, and Asn199 each bind S-adenosyl-L-methionine. 199–202 (NPPY) provides a ligand contact to substrate.

This sequence belongs to the protein N5-glutamine methyltransferase family. PrmC subfamily.

It carries out the reaction L-glutaminyl-[peptide chain release factor] + S-adenosyl-L-methionine = N(5)-methyl-L-glutaminyl-[peptide chain release factor] + S-adenosyl-L-homocysteine + H(+). Its function is as follows. Methylates the class 1 translation termination release factors RF1/PrfA and RF2/PrfB on the glutamine residue of the universally conserved GGQ motif. The chain is Release factor glutamine methyltransferase from Prochlorococcus marinus (strain SARG / CCMP1375 / SS120).